The following is a 361-amino-acid chain: S-adenosylmethionine-dependent nucleotide dehydratase RSAD2 (361 aa).

The region spanning 69-289 is the Radical SAM core domain; the sequence is PTTPTSVNYH…LERHKEVSCL (221 aa). Cys-83, Cys-87, and Cys-90 together coordinate [4Fe-4S] cluster. Lys-197 carries the post-translational modification N6-acetyllysine. Lys-206 participates in a covalent cross-link: Glycyl lysine isopeptide (Lys-Gly) (interchain with G-Cter in ubiquitin).

This sequence belongs to the radical SAM superfamily. RSAD2 family. In terms of assembly, homodimer. Interacts with IRAK1 and TRAF6. Interacts with FPPS. Interacts with HADHB. Interacts (via C-terminus) with VAPA/VAP33 (via C-terminus). As to quaternary structure, (Microbial infection) Interacts with human cytomegalovirus/HHV-5 protein vMIA/UL37; this interaction results in RSAD2/viperin relocalization from the endoplasmic reticulum to the mitochondria. (Microbial infection) Interacts (via N-terminus) with enterovirus A71 protein 2C; this interaction inhibits viral replication. In terms of assembly, (Microbial infection) Interacts with herpes simplex virus 1/HHV-1 glycoprotein D; this interaction inhibits HHV-1 replication by facilitating IRF7-mediated IFN-beta production. The cofactor is [4Fe-4S] cluster. Post-translationally, acetylated by HAT1. HAT1-mediated acetylation of Lys-197 in turn recruits UBE4A that stimulates RSAD2 polyubiquitination leading to proteasomal degradation. 'Lys-6'-linked polyubiquitination at Lys-206 leads to RSAD2 protein degradation.

Its subcellular location is the endoplasmic reticulum membrane. It is found in the golgi apparatus. The protein localises to the endoplasmic reticulum. It localises to the lipid droplet. The protein resides in the mitochondrion. Its subcellular location is the mitochondrion inner membrane. It is found in the mitochondrion outer membrane. The catalysed reaction is CTP + AH2 + S-adenosyl-L-methionine = 3'-deoxy-3',4'-didehydro-CTP + 5'-deoxyadenosine + L-methionine + A + H2O + H(+). With respect to regulation, IRAK1 and TRAF6 synergistically activate RSAD2 increasing its activity with CTP as substrate about 10-fold. Its function is as follows. Interferon-inducible antiviral protein which plays a major role in the cell antiviral state induced by type I and type II interferon. Catalyzes the conversion of cytidine triphosphate (CTP) to 3'-deoxy-3',4'-didehydro-CTP (ddhCTP) via a SAM-dependent radical mechanism. In turn, ddhCTP acts as a chain terminator for the RNA-dependent RNA polymerases from multiple viruses and directly inhibits viral replication. Therefore, inhibits a wide range of DNA and RNA viruses, including human cytomegalovirus (HCMV), hepatitis C virus (HCV), west Nile virus (WNV), dengue virus, sindbis virus, influenza A virus, sendai virus, vesicular stomatitis virus (VSV), zika virus, and human immunodeficiency virus (HIV-1). Also promotes TLR7 and TLR9-dependent production of IFN-beta production in plasmacytoid dendritic cells (pDCs) by facilitating 'Lys-63'-linked ubiquitination of IRAK1 by TRAF6. Plays a role in CD4+ T-cells activation and differentiation. Facilitates T-cell receptor (TCR)-mediated GATA3 activation and optimal T-helper 2 (Th2) cytokine production by modulating NFKB1 and JUNB activities. Can inhibit secretion of soluble proteins. This chain is S-adenosylmethionine-dependent nucleotide dehydratase RSAD2, found in Homo sapiens (Human).